The primary structure comprises 390 residues: Zinc finger CCCH domain-containing protein 46 (390 aa).

The C3H1-type zinc-finger motif lies at 2–29 (SRRQEICRNFQRGSCKYGAQCRYLHASP). The segment at 27–129 (ASPHQQQQQQ…AAHTSCEDPQ (103 aa)) is disordered. Residues 48-76 (GSRQQQQPSFGSQFQQQQQQQQKPNPFGF) are compositionally biased toward low complexity. Residues 106-129 (PTKQTEAVQPPQAQAAHTSCEDPQ) are compositionally biased toward polar residues. Residues 146–211 (WKLTCYAHLR…FTNLLNSARP (66 aa)) are required for transcriptional activation activity. The segment covering 230-248 (SSFGASQTNGPPVFSSFSQ) has biased composition (polar residues). Positions 230–284 (SSFGASQTNGPPVFSSFSQIGAATNIGPGPGTTAPGMPASSPFGHPSSAPLAAPT) are disordered. A compositionally biased stretch (low complexity) spans 250 to 268 (GAATNIGPGPGTTAPGMPA).

As to quaternary structure, interacts with GSK1 and GSK4. Post-translationally, phosphorylated on serine and threonine residues by GSK1. Phosphorylation represses nuclear localization. Expressed in the adaxial face of the collar, nodes and the basal region of elongating internodes.

It localises to the nucleus. It is found in the cytoplasm. Functionally, transcriptional activator that binds double-stranded DNA and the single-stranded RNA polymers poly(rA), poly(rU) and poly(rG), but not poly(rC). Mediates optimal plant architecture through brassinosteroid (BR) signaling. May act as a negative regulator in sterol homeostasis. Acts as a negative regulator of BR signaling. Binds to the specific DNA sequence 5'-CTCGC-3' of BZR1 promoter and negatively regulates BZR1. Acts as an antagonistic transcription factor of BZR1 to attenuate the BR signaling pathway and regulate leaf bending. Represses the expression of ILI1, and activates that of IBH1 to balance the regulation activity of BZR1. The chain is Zinc finger CCCH domain-containing protein 46 from Oryza sativa subsp. japonica (Rice).